The primary structure comprises 151 residues: SsrA-binding protein (151 aa).

It belongs to the SmpB family.

The protein resides in the cytoplasm. Required for rescue of stalled ribosomes mediated by trans-translation. Binds to transfer-messenger RNA (tmRNA), required for stable association of tmRNA with ribosomes. tmRNA and SmpB together mimic tRNA shape, replacing the anticodon stem-loop with SmpB. tmRNA is encoded by the ssrA gene; the 2 termini fold to resemble tRNA(Ala) and it encodes a 'tag peptide', a short internal open reading frame. During trans-translation Ala-aminoacylated tmRNA acts like a tRNA, entering the A-site of stalled ribosomes, displacing the stalled mRNA. The ribosome then switches to translate the ORF on the tmRNA; the nascent peptide is terminated with the 'tag peptide' encoded by the tmRNA and targeted for degradation. The ribosome is freed to recommence translation, which seems to be the essential function of trans-translation. This Chlamydia pneumoniae (Chlamydophila pneumoniae) protein is SsrA-binding protein.